The sequence spans 221 residues: Small ribosomal subunit protein uS3 (221 aa).

In terms of domain architecture, KH type-2 spans 39–108 (IRKFVKKELF…NILINIVEVK (70 aa)).

Belongs to the universal ribosomal protein uS3 family. Part of the 30S ribosomal subunit. Forms a tight complex with proteins S10 and S14.

Binds the lower part of the 30S subunit head. Binds mRNA in the 70S ribosome, positioning it for translation. This Clostridium botulinum (strain Alaska E43 / Type E3) protein is Small ribosomal subunit protein uS3.